Reading from the N-terminus, the 302-residue chain is Phosphoribosylaminoimidazole-succinocarboxamide synthase (302 aa).

Belongs to the SAICAR synthetase family.

The catalysed reaction is 5-amino-1-(5-phospho-D-ribosyl)imidazole-4-carboxylate + L-aspartate + ATP = (2S)-2-[5-amino-1-(5-phospho-beta-D-ribosyl)imidazole-4-carboxamido]succinate + ADP + phosphate + 2 H(+). The protein operates within purine metabolism; IMP biosynthesis via de novo pathway; 5-amino-1-(5-phospho-D-ribosyl)imidazole-4-carboxamide from 5-amino-1-(5-phospho-D-ribosyl)imidazole-4-carboxylate: step 1/2. This is Phosphoribosylaminoimidazole-succinocarboxamide synthase from Cupriavidus taiwanensis (strain DSM 17343 / BCRC 17206 / CCUG 44338 / CIP 107171 / LMG 19424 / R1) (Ralstonia taiwanensis (strain LMG 19424)).